The following is a 370-amino-acid chain: Phenylalanine dehydrogenase (370 aa).

Residue Arg-44 participates in NAD(+) binding. Lys-68 is an L-phenylalanine binding site. Lys-80 serves as the catalytic Proton donor/acceptor. 114–115 (TD) is a binding site for L-phenylalanine. NAD(+) is bound by residues Asp-115, Ser-146, Thr-150, 180–186 (GLGKVGF), 203–204 (DV), 243–244 (AI), and 264–266 (AAN). Asn-266 serves as a coordination point for L-phenylalanine.

This sequence belongs to the Glu/Leu/Phe/Val dehydrogenases family.

The enzyme catalyses L-phenylalanine + NAD(+) + H2O = 3-phenylpyruvate + NH4(+) + NADH + H(+). The protein operates within amino-acid biosynthesis; L-phenylalanine biosynthesis; L-phenylalanine from phenylpyruvate (PDH route): step 1/1. Functionally, catalyzes the reversible NAD(+)-dependent oxidative deamination of L-phenylalanine to phenylpyruvate. This is Phenylalanine dehydrogenase from Caldalkalibacillus thermarum (strain TA2.A1).